The primary structure comprises 268 residues: MNRYQALFQRLSAAQQGAFVPFVTIGDPNPEQSLAIMQTLIDAGADALELGMPFSDPLADGPTIQGANLRALAAKTTPDICFELIAQIRARNPETPIGLLMYANLVYARGIDDFYQRCQKAGVDSVLIADVPTNESQPFVAAAEKFGIQPIFIAPPTASDETLRAVAQLGKGYTYLLSRAGVTGAETKANMPVHALLERLQQFDAPPALLGFGISEPAQVKQAIEAGAAGAISGSAVVKIIETHLDNPAKQLTELANFTQAMKKATKI.

Residues Glu-49 and Asp-60 each act as proton acceptor in the active site.

It belongs to the TrpA family. Tetramer of two alpha and two beta chains.

It catalyses the reaction (1S,2R)-1-C-(indol-3-yl)glycerol 3-phosphate + L-serine = D-glyceraldehyde 3-phosphate + L-tryptophan + H2O. It participates in amino-acid biosynthesis; L-tryptophan biosynthesis; L-tryptophan from chorismate: step 5/5. The alpha subunit is responsible for the aldol cleavage of indoleglycerol phosphate to indole and glyceraldehyde 3-phosphate. The protein is Tryptophan synthase alpha chain of Vibrio cholerae serotype O1 (strain ATCC 39541 / Classical Ogawa 395 / O395).